The following is a 621-amino-acid chain: DnaJ homolog subfamily C member 2 (621 aa).

Met1 is modified (N-acetylmethionine). Residues Ser47, Ser49, Ser60, and Ser63 each carry the phosphoserine modification. A J domain is found at 88–161 (DHYAVLGLGH…VKRRAFNSVD (74 aa)). A ZRF1-UBD region spans residues 160–250 (VDPTFDNSVP…RDERRWIEKQ (91 aa)). Position 183 is a phosphoserine (Ser183). 2 disordered regions span residues 294 to 315 (EKKAKAEAKRKEQEAKEKQRQA) and 427 to 453 (EEAEAHMRQASKNTEKSAGGGGNGSKN). SANT domains are found at residues 449-511 (NGSK…KLDP) and 549-604 (TDFT…EMVK).

Component of ribosome-associated complex (RAC), a heterodimer composed of Hsp70/DnaK-type chaperone HSPA14 and Hsp40/DnaJ-type chaperone DNAJC2. Interacts (via ZRF1-UBD region) with ID1. Post-translationally, phosphorylated in M (mitotic) phase.

Its subcellular location is the nucleus. It is found in the cytoplasm. The protein resides in the cytosol. Functionally, acts both as a chaperone in the cytosol and as a chromatin regulator in the nucleus. When cytosolic, acts as a molecular chaperone: component of the ribosome-associated complex (RAC), a complex involved in folding or maintaining nascent polypeptides in a folding-competent state. In the RAC complex, stimulates the ATPase activity of the ribosome-associated pool of Hsp70-type chaperones HSPA14 that bind to the nascent polypeptide chain. When nuclear, mediates the switching from polycomb-repressed genes to an active state: specifically recruited at histone H2A ubiquitinated at 'Lys-119' (H2AK119ub), and promotes the displacement of the polycomb PRC1 complex from chromatin, thereby facilitating transcription activation. The sequence is that of DnaJ homolog subfamily C member 2 (DNAJC2) from Macaca fascicularis (Crab-eating macaque).